A 1126-amino-acid polypeptide reads, in one-letter code: Protein translocase subunit SecA (1126 aa).

Residues Q175, G193–T197, and D694 each bind ATP. A disordered region spans residues V1060 to L1126. Residues A1064 to D1080 are compositionally biased toward basic and acidic residues. Zn(2+) contacts are provided by C1110, C1112, C1121, and H1122.

The protein belongs to the SecA family. In terms of assembly, monomer and homodimer. Part of the essential Sec protein translocation apparatus which comprises SecA, SecYEG and auxiliary proteins SecDF. Other proteins may also be involved. It depends on Zn(2+) as a cofactor.

Its subcellular location is the cell inner membrane. The protein localises to the cytoplasm. It catalyses the reaction ATP + H2O + cellular proteinSide 1 = ADP + phosphate + cellular proteinSide 2.. In terms of biological role, part of the Sec protein translocase complex. Interacts with the SecYEG preprotein conducting channel. Has a central role in coupling the hydrolysis of ATP to the transfer of proteins into and across the cell membrane, serving as an ATP-driven molecular motor driving the stepwise translocation of polypeptide chains across the membrane. The sequence is that of Protein translocase subunit SecA from Parabacteroides distasonis (strain ATCC 8503 / DSM 20701 / CIP 104284 / JCM 5825 / NCTC 11152).